Consider the following 552-residue polypeptide: Carboxypeptidase Y homolog A (552 aa).

An N-terminal signal peptide occupies residues 1–17 (MRVLPATLLVGAATAAT). Positions 18-133 (PAQQVLGGLQ…KLEAYDLRIK (116 aa)) are excised as a propeptide. Disulfide bonds link cysteine 188–cysteine 428, cysteine 322–cysteine 336, cysteine 346–cysteine 369, cysteine 353–cysteine 362, and cysteine 391–cysteine 398. Residue asparagine 219 is glycosylated (N-linked (GlcNAc...) asparagine). Serine 275 is a catalytic residue. Residue aspartate 467 is part of the active site. N-linked (GlcNAc...) asparagine glycosylation is present at asparagine 518. Histidine 529 is an active-site residue.

Belongs to the peptidase S10 family.

The protein resides in the vacuole. It catalyses the reaction Release of a C-terminal amino acid with broad specificity.. Its function is as follows. Vacuolar carboxypeptidase involved in degradation of small peptides. Digests preferentially peptides containing an aliphatic or hydrophobic residue in P1' position, as well as methionine, leucine or phenylalanine in P1 position of ester substrate. The protein is Carboxypeptidase Y homolog A (cpyA) of Emericella nidulans (strain FGSC A4 / ATCC 38163 / CBS 112.46 / NRRL 194 / M139) (Aspergillus nidulans).